A 1427-amino-acid polypeptide reads, in one-letter code: Double-stranded DNA deaminase toxin A (1427 aa).

2 helical membrane-spanning segments follow: residues 16–36 (ALAG…AVAF) and 43–63 (FGVA…LLSI). YD repeat units lie at residues 469-501 (RVVE…DGRT), 548-584 (YDDA…GPDG), 720-747 (NARG…GRLR), and 977-1008 (YDGA…ISRA). The C-terminal effector domain, has cytidine deaminase activity stretch occupies residues 1264–1427 (IGLNGGANVY…SPKSPTKGGC (164 aa)). Residues His1345, Cys1373, and Cys1376 each contribute to the Zn(2+) site. Positions 1402 to 1427 (KRGATGETKVFTGNSNSPKSPTKGGC) are disordered. A compositionally biased stretch (polar residues) spans 1412 to 1421 (FTGNSNSPKS).

This sequence belongs to the RHS/WapA nuclease family. The toxic domain forms a 1:1 complex with the DddI immunity protein.

The protein resides in the membrane. It catalyses the reaction a 2'-deoxycytidine in double-stranded DNA + H2O + H(+) = a 2'-deoxyuridine in double-stranded DNA + NH4(+). In terms of biological role, toxic component of a toxin-immunity protein module, which functions as a cellular contact-dependent growth inhibition (CDI) system. CDI modules allow bacteria to communicate with and inhibit the growth of closely related neighboring bacteria in a contact-dependent fashion. Bacteria that have this module inhibit or kill bacteria without it, giving them a growth advantage. Probably specifically inhibited by cognate immunity protein DddI. The C-terminal 163 residue fragment has double-stranded DNA cytidine deaminase activity; it does not deaminate ssDNA, ssRNA or dsRNA. Leads to C:G to T:A conversions in deaminated DNA. Preferentially deaminates 5'-TC-3' substrates. The chain is Double-stranded DNA deaminase toxin A from Burkholderia cenocepacia (strain H111).